The following is a 460-amino-acid chain: Bifunctional protein GlmU (460 aa).

The segment at 1–232 is pyrophosphorylase; sequence MALNVVILAA…AIEVEGANNR (232 aa). Residues 8-11, Lys22, Gln73, 78-79, 100-102, Gly137, Glu157, Asn172, and Asn230 each bind UDP-N-acetyl-alpha-D-glucosamine; these read LAAG, GT, and YGD. Asp102 provides a ligand contact to Mg(2+). Asn230 provides a ligand contact to Mg(2+). Residues 233-253 are linker; that stretch reads VQLAQLERAYQAREAEKLMLA. An N-acetyltransferase region spans residues 254–460; it reads GANLRDPSRI…GWQRPVKIKK (207 aa). UDP-N-acetyl-alpha-D-glucosamine is bound by residues Arg336 and Lys354. His366 functions as the Proton acceptor in the catalytic mechanism. Positions 369 and 380 each coordinate UDP-N-acetyl-alpha-D-glucosamine. Acetyl-CoA-binding positions include Ala383, 389–390, Ser408, Ala426, and Arg443; that span reads NY.

The protein in the N-terminal section; belongs to the N-acetylglucosamine-1-phosphate uridyltransferase family. In the C-terminal section; belongs to the transferase hexapeptide repeat family. In terms of assembly, homotrimer. Requires Mg(2+) as cofactor.

It localises to the cytoplasm. The enzyme catalyses alpha-D-glucosamine 1-phosphate + acetyl-CoA = N-acetyl-alpha-D-glucosamine 1-phosphate + CoA + H(+). The catalysed reaction is N-acetyl-alpha-D-glucosamine 1-phosphate + UTP + H(+) = UDP-N-acetyl-alpha-D-glucosamine + diphosphate. The protein operates within nucleotide-sugar biosynthesis; UDP-N-acetyl-alpha-D-glucosamine biosynthesis; N-acetyl-alpha-D-glucosamine 1-phosphate from alpha-D-glucosamine 6-phosphate (route II): step 2/2. It participates in nucleotide-sugar biosynthesis; UDP-N-acetyl-alpha-D-glucosamine biosynthesis; UDP-N-acetyl-alpha-D-glucosamine from N-acetyl-alpha-D-glucosamine 1-phosphate: step 1/1. Its pathway is bacterial outer membrane biogenesis; LPS lipid A biosynthesis. Functionally, catalyzes the last two sequential reactions in the de novo biosynthetic pathway for UDP-N-acetylglucosamine (UDP-GlcNAc). The C-terminal domain catalyzes the transfer of acetyl group from acetyl coenzyme A to glucosamine-1-phosphate (GlcN-1-P) to produce N-acetylglucosamine-1-phosphate (GlcNAc-1-P), which is converted into UDP-GlcNAc by the transfer of uridine 5-monophosphate (from uridine 5-triphosphate), a reaction catalyzed by the N-terminal domain. The sequence is that of Bifunctional protein GlmU from Shewanella baltica (strain OS223).